The primary structure comprises 446 residues: Glutamyl-tRNA(Gln) amidotransferase subunit D (446 aa).

The 332-residue stretch at 90 to 421 (SEVMIISTGG…DRIKEIMLTN (332 aa)) folds into the Asparaginase/glutaminase domain. Residues Thr-100, Thr-176, Asp-177, and Lys-255 contribute to the active site.

This sequence belongs to the asparaginase 1 family. GatD subfamily. As to quaternary structure, heterodimer of GatD and GatE.

The catalysed reaction is L-glutamyl-tRNA(Gln) + L-glutamine + ATP + H2O = L-glutaminyl-tRNA(Gln) + L-glutamate + ADP + phosphate + H(+). In terms of biological role, allows the formation of correctly charged Gln-tRNA(Gln) through the transamidation of misacylated Glu-tRNA(Gln) in organisms which lack glutaminyl-tRNA synthetase. The reaction takes place in the presence of glutamine and ATP through an activated gamma-phospho-Glu-tRNA(Gln). The GatDE system is specific for glutamate and does not act on aspartate. This Sulfolobus acidocaldarius (strain ATCC 33909 / DSM 639 / JCM 8929 / NBRC 15157 / NCIMB 11770) protein is Glutamyl-tRNA(Gln) amidotransferase subunit D.